Here is a 316-residue protein sequence, read N- to C-terminus: Tyrosine recombinase XerC (316 aa).

A Core-binding (CB) domain is found at 11-97 (SGLRKPLDQF…SLRSFFDFLI (87 aa)). The Tyr recombinase domain maps to 118–298 (PLPKNLDVDE…DFQHLADVYD (181 aa)). Catalysis depends on residues Arg157, Lys181, His250, Arg253, and His276. The active-site O-(3'-phospho-DNA)-tyrosine intermediate is the Tyr285.

This sequence belongs to the 'phage' integrase family. XerC subfamily. As to quaternary structure, forms a cyclic heterotetrameric complex composed of two molecules of XerC and two molecules of XerD.

It is found in the cytoplasm. In terms of biological role, site-specific tyrosine recombinase, which acts by catalyzing the cutting and rejoining of the recombining DNA molecules. The XerC-XerD complex is essential to convert dimers of the bacterial chromosome into monomers to permit their segregation at cell division. It also contributes to the segregational stability of plasmids. In Vibrio vulnificus (strain CMCP6), this protein is Tyrosine recombinase XerC.